The chain runs to 221 residues: Thiopurine S-methyltransferase (221 aa).

The S-adenosyl-L-methionine site is built by Trp12, Leu47, Glu68, and Arg125.

It belongs to the class I-like SAM-binding methyltransferase superfamily. TPMT family.

The protein localises to the cytoplasm. The catalysed reaction is S-adenosyl-L-methionine + a thiopurine = S-adenosyl-L-homocysteine + a thiopurine S-methylether.. This Legionella pneumophila (strain Paris) protein is Thiopurine S-methyltransferase.